The chain runs to 99 residues: Beta-defensin 127 (99 aa).

A signal peptide spans 1–20; that stretch reads MGLFMIIAILLFQKPTVTEQ. Cystine bridges form between cysteine 24–cysteine 53, cysteine 33–cysteine 47, and cysteine 37–cysteine 54. Positions 66–99 are excised as a propeptide; sequence ITKPSHPKPATLALTLQDYVTIIENFPSLKTQST.

It belongs to the beta-defensin family.

It is found in the secreted. Functionally, has antibacterial activity. This chain is Beta-defensin 127 (DEFB127), found in Pan troglodytes (Chimpanzee).